The sequence spans 394 residues: Protein NDRG1 (394 aa).

The residue at position 2 (Ser2) is an N-acetylserine. 3 positions are modified to phosphoserine: Ser2, Ser319, and Ser326. Residues 325-394 (RSRTASGSSV…AGPKSMEVSC (70 aa)) form a disordered region. A compositionally biased stretch (polar residues) spans 327–339 (RTASGSSVTSLEG). Thr328 carries the phosphothreonine modification. Ser330 carries the post-translational modification Phosphoserine. Ser332 bears the Phosphoserine; by SGK1 mark. Ser333 bears the Phosphoserine mark. The residue at position 335 (Thr335) is a Phosphothreonine. Ser336 carries the post-translational modification Phosphoserine. 3 tandem repeats follow at residues 339–348 (GTRSRSHTSE), 349–358 (GPRSRSHTSE), and 359–368 (GSRSRSHTSE). Positions 339-368 (GTRSRSHTSEGPRSRSHTSEGSRSRSHTSE) are 3 X 10 AA tandem repeats of G-[PST]-R-S-R-S-H-T-S-E. At Thr340 the chain carries Phosphothreonine. At Ser342 the chain carries Phosphoserine. Basic and acidic residues predominate over residues 345–371 (HTSEGPRSRSHTSEGSRSRSHTSEDAR). Thr346 carries the phosphothreonine modification. Ser352 carries the post-translational modification Phosphoserine. Thr356 is subject to Phosphothreonine; by SGK1. Residues Ser362 and Ser364 each carry the phosphoserine modification. A phosphothreonine mark is found at Thr366 and Thr375. The span at 374–386 (ITPSSGATGNNAG) shows a compositional bias: polar residues.

Belongs to the NDRG family. In terms of assembly, interacts with RAB4A (membrane-bound form); the interaction involves NDRG1 in vesicular recycling of CDH1. Interacts with APOA1, APOA2, PRA1 and RTN1. Post-translationally, under stress conditions, phosphorylated in the C-terminal on many serine and threonine residues. Phosphorylated in vitro by PKA. Phosphorylation enhanced by increased intracellular cAMP levels. Homocysteine induces dephosphorylation. Phosphorylation by SGK1 is cell cycle dependent.

It localises to the cytoplasm. The protein localises to the cytosol. It is found in the cytoskeleton. Its subcellular location is the microtubule organizing center. The protein resides in the centrosome. It localises to the nucleus. The protein localises to the cell membrane. In terms of biological role, stress-responsive protein involved in hormone responses, cell growth, and differentiation. Acts as a tumor suppressor in many cell types. Necessary but not sufficient for p53/TP53-mediated caspase activation and apoptosis. Has a role in cell trafficking notably of the Schwann cell and is necessary for the maintenance and development of the peripheral nerve myelin sheath. Required for vesicular recycling of CDH1 and TF. May also function in lipid trafficking. Protects cells from spindle disruption damage. Functions in p53/TP53-dependent mitotic spindle checkpoint. Regulates microtubule dynamics and maintains euploidy. The protein is Protein NDRG1 (Ndrg1) of Rattus norvegicus (Rat).